We begin with the raw amino-acid sequence, 88 residues long: ATP synthase subunit c 2 (88 aa).

The next 2 membrane-spanning stretches (helical) occupy residues F4–I24 and I53–L73.

It belongs to the ATPase C chain family. As to quaternary structure, F-type ATPases have 2 components, F(1) - the catalytic core - and F(0) - the membrane proton channel. F(1) has five subunits: alpha(3), beta(3), gamma(1), delta(1), epsilon(1). F(0) has three main subunits: a(1), b(2) and c(10-14). The alpha and beta chains form an alternating ring which encloses part of the gamma chain. F(1) is attached to F(0) by a central stalk formed by the gamma and epsilon chains, while a peripheral stalk is formed by the delta and b chains.

The protein resides in the cell inner membrane. F(1)F(0) ATP synthase produces ATP from ADP in the presence of a proton or sodium gradient. F-type ATPases consist of two structural domains, F(1) containing the extramembraneous catalytic core and F(0) containing the membrane proton channel, linked together by a central stalk and a peripheral stalk. During catalysis, ATP synthesis in the catalytic domain of F(1) is coupled via a rotary mechanism of the central stalk subunits to proton translocation. In terms of biological role, key component of the F(0) channel; it plays a direct role in translocation across the membrane. A homomeric c-ring of between 10-14 subunits forms the central stalk rotor element with the F(1) delta and epsilon subunits. The polypeptide is ATP synthase subunit c 2 (Syntrophotalea carbinolica (strain DSM 2380 / NBRC 103641 / GraBd1) (Pelobacter carbinolicus)).